The sequence spans 425 residues: Serine--tRNA ligase (425 aa).

Residue 230–232 participates in L-serine binding; the sequence is TAE. Position 261–263 (261–263) interacts with ATP; sequence RSE. Glutamate 284 is an L-serine binding site. 348–351 is an ATP binding site; that stretch reads EISS. Serine 384 serves as a coordination point for L-serine.

This sequence belongs to the class-II aminoacyl-tRNA synthetase family. Type-1 seryl-tRNA synthetase subfamily. In terms of assembly, homodimer. The tRNA molecule binds across the dimer.

It is found in the cytoplasm. The catalysed reaction is tRNA(Ser) + L-serine + ATP = L-seryl-tRNA(Ser) + AMP + diphosphate + H(+). The enzyme catalyses tRNA(Sec) + L-serine + ATP = L-seryl-tRNA(Sec) + AMP + diphosphate + H(+). It functions in the pathway aminoacyl-tRNA biosynthesis; selenocysteinyl-tRNA(Sec) biosynthesis; L-seryl-tRNA(Sec) from L-serine and tRNA(Sec): step 1/1. In terms of biological role, catalyzes the attachment of serine to tRNA(Ser). Is also able to aminoacylate tRNA(Sec) with serine, to form the misacylated tRNA L-seryl-tRNA(Sec), which will be further converted into selenocysteinyl-tRNA(Sec). The protein is Serine--tRNA ligase of Streptococcus pyogenes serotype M2 (strain MGAS10270).